A 540-amino-acid chain; its full sequence is Chaperonin GroEL (540 aa).

ATP contacts are provided by residues 30 to 33, 87 to 91, glycine 415, and aspartate 496; these read TLGP and DGTTT.

The protein belongs to the chaperonin (HSP60) family. As to quaternary structure, forms a cylinder of 14 subunits composed of two heptameric rings stacked back-to-back. Interacts with the co-chaperonin GroES.

Its subcellular location is the cytoplasm. It carries out the reaction ATP + H2O + a folded polypeptide = ADP + phosphate + an unfolded polypeptide.. Its function is as follows. Together with its co-chaperonin GroES, plays an essential role in assisting protein folding. The GroEL-GroES system forms a nano-cage that allows encapsulation of the non-native substrate proteins and provides a physical environment optimized to promote and accelerate protein folding. This Symbiobacterium thermophilum (strain DSM 24528 / JCM 14929 / IAM 14863 / T) protein is Chaperonin GroEL.